The primary structure comprises 342 residues: N-acetyl-gamma-glutamyl-phosphate reductase (342 aa).

Cysteine 156 is a catalytic residue.

It belongs to the NAGSA dehydrogenase family. Type 1 subfamily.

Its subcellular location is the cytoplasm. It carries out the reaction N-acetyl-L-glutamate 5-semialdehyde + phosphate + NADP(+) = N-acetyl-L-glutamyl 5-phosphate + NADPH + H(+). The protein operates within amino-acid biosynthesis; L-arginine biosynthesis; N(2)-acetyl-L-ornithine from L-glutamate: step 3/4. In terms of biological role, catalyzes the NADPH-dependent reduction of N-acetyl-5-glutamyl phosphate to yield N-acetyl-L-glutamate 5-semialdehyde. This Pseudoalteromonas atlantica (strain T6c / ATCC BAA-1087) protein is N-acetyl-gamma-glutamyl-phosphate reductase.